The following is a 1461-amino-acid chain: Phospholipid-transporting ATPase VB (1461 aa).

Residues 1–82 (MALSVDSSWH…TTKYTLFTFL (82 aa)) are Cytoplasmic-facing. Residues 83-104 (PRNLFEQFHRWANLYFLFLVIL) form a helical membrane-spanning segment. Residues 105–110 (NWMPSM) lie on the Exoplasmic loop side of the membrane. Residues 111–132 (EVFHREITMLPLAIVLFVIMIK) form a helical membrane-spanning segment. At 133–316 (DGMEDFKRHR…SKIERRMNID (184 aa)) the chain is on the cytoplasmic side. Residues 317-338 (IFFCIGILILMCLIGAVGHSIW) form a helical membrane-spanning segment. Over 339-368 (NGTFEEHPPFDVPDANGSFLPSALGGFYMF) the chain is Exoplasmic loop. The chain crosses the membrane as a helical span at residues 369–390 (LTMIILLQVLIPISLYVSIELV). Residues 391–1111 (KLGQVFFLSN…GHWCYSRLAR (721 aa)) are Cytoplasmic-facing. Asp433 functions as the 4-aspartylphosphate intermediate in the catalytic mechanism. Positions 433, 434, and 435 each coordinate ATP. Residue Asp433 coordinates Mg(2+). Thr435 contacts Mg(2+). Polar residues-rich tracts occupy residues 496–511 (MRSQKGAQPLRRSQSA) and 530–539 (SQPPVAFSSS). Disordered stretches follow at residues 496-541 (MRSQ…SSIE) and 640-687 (TAPS…MWDQ). The ATP site is built by Glu724, Phe766, Lys790, Arg835, Thr915, Gly916, Asp917, Arg1029, and Lys1035. A Mg(2+)-binding site is contributed by Asp1055. ATP-binding residues include Asn1058 and Asp1059. Asp1059 is a Mg(2+) binding site. The helical transmembrane segment at 1112–1132 (MVVYYLYKNVCYVNLLFWYQF) threads the bilayer. Over 1133–1144 (FCGFSSSTMIDY) the chain is Exoplasmic loop. The helical transmembrane segment at 1145–1164 (WQMIFFNLFFTSLPPLVFGV) threads the bilayer. Over 1165–1194 (LDKDISAETLLALPELYKSGQNSECYNLST) the chain is Cytoplasmic. A helical transmembrane segment spans residues 1195–1216 (FWISMVDAFYQSLICFFIPYLA). Over 1217 to 1223 (YKGSDID) the chain is Exoplasmic loop. The helical transmembrane segment at 1224–1246 (VFTFGTPINTISLTTILLHQAME) threads the bilayer. Residues 1247 to 1252 (MKTWTI) are Cytoplasmic-facing. Residues 1253 to 1273 (FHGVVLLGSFLMYFLVSLLYN) form a helical membrane-spanning segment. The Exoplasmic loop portion of the chain corresponds to 1274 to 1291 (ATCVICNSPTNPYWVMEG). A helical membrane pass occupies residues 1292 to 1316 (QLSNPTFYLVCFLTPVVALLPRYFF). Residues 1317–1461 (LSLQGTCGKS…HRRSQSSLTI (145 aa)) are Cytoplasmic-facing. A disordered region spans residues 1346-1397 (IQSWRSRQRPAPVPEVARPTHHPVSSITGQDFSASTPKSSNPPKRKHVEESV). The segment covering 1368–1387 (PVSSITGQDFSASTPKSSNP) has biased composition (polar residues).

Belongs to the cation transport ATPase (P-type) (TC 3.A.3) family. Type IV subfamily. Component of a P4-ATPase flippase complex which consists of a catalytic alpha subunit ATP10B and an accessory beta subunit TMEM30A. Mg(2+) is required as a cofactor. In terms of processing, autophosphorylated at the conserved aspartate of the P-type ATPase signature sequence. In terms of tissue distribution, expressed in predominantly in brain structures including medulla oblongata, substantia nigra and basal ganglia. Expressed in the gastrointestinal system with highest levels in the small intestine and colon. Also expressed at low levels in testis and thymus.

It is found in the late endosome membrane. The protein localises to the lysosome membrane. Its subcellular location is the endoplasmic reticulum membrane. It carries out the reaction ATP + H2O + phospholipidSide 1 = ADP + phosphate + phospholipidSide 2.. It catalyses the reaction a beta-D-glucosyl-(1&lt;-&gt;1')-N-acylsphing-4-enine(out) + ATP + H2O = a beta-D-glucosyl-(1&lt;-&gt;1')-N-acylsphing-4-enine(in) + ADP + phosphate + H(+). In terms of biological role, catalytic component of a P4-ATPase flippase complex, which catalyzes the hydrolysis of ATP coupled to the transport of glucosylceramide (GlcCer) from the outer to the inner leaflet of lysosome membranes. Plays an important role in the maintenance of lysosome membrane integrity and function in cortical neurons. The chain is Phospholipid-transporting ATPase VB from Homo sapiens (Human).